The following is a 172-amino-acid chain: Small ribosomal subunit protein uS13 (172 aa).

Residues 131 to 172 (GQRTRTTGRTGVTVGVRRSKAAQAAQQQQKAQASSGGEKKQG) are disordered. Residues 134-163 (TRTTGRTGVTVGVRRSKAAQAAQQQQKAQA) are compositionally biased toward low complexity.

The protein belongs to the universal ribosomal protein uS13 family. In terms of assembly, part of the 30S ribosomal subunit. Forms a loose heterodimer with protein S19. Forms two bridges to the 50S subunit in the 70S ribosome.

Functionally, located at the top of the head of the 30S subunit, it contacts several helices of the 16S rRNA. In the 70S ribosome it contacts the 23S rRNA (bridge B1a) and protein L5 of the 50S subunit (bridge B1b), connecting the 2 subunits; these bridges are implicated in subunit movement. The protein is Small ribosomal subunit protein uS13 of Sulfurisphaera tokodaii (strain DSM 16993 / JCM 10545 / NBRC 100140 / 7) (Sulfolobus tokodaii).